The chain runs to 257 residues: Hydroxyethylthiazole kinase (257 aa).

Methionine 49 provides a ligand contact to substrate. Residues arginine 124 and threonine 170 each coordinate ATP. A substrate-binding site is contributed by glycine 197.

It belongs to the Thz kinase family. It depends on Mg(2+) as a cofactor.

The catalysed reaction is 5-(2-hydroxyethyl)-4-methylthiazole + ATP = 4-methyl-5-(2-phosphooxyethyl)-thiazole + ADP + H(+). The protein operates within cofactor biosynthesis; thiamine diphosphate biosynthesis; 4-methyl-5-(2-phosphoethyl)-thiazole from 5-(2-hydroxyethyl)-4-methylthiazole: step 1/1. Its function is as follows. Catalyzes the phosphorylation of the hydroxyl group of 4-methyl-5-beta-hydroxyethylthiazole (THZ). In Klebsiella pneumoniae (strain 342), this protein is Hydroxyethylthiazole kinase.